We begin with the raw amino-acid sequence, 502 residues long: MKIAVIGAGVTGLAAAARIASQGHEVTIFEKNNNVGGRMNQLKKDGFTFDMGPAIVMMPDVYKDVFTMCGKNYEDYIELRQLRYIYDVYFDRDDCITVPTDLAELQHMLESIEPGSTHGFMSFLTDVYKKYEIARRYFLERTYRKPSDFYNMTSLVQGAKLKTLNHADQLIEHYIDNEKIQKLLAFQTLYIGIDPKRGPSLYSIIPMIEMMFGVHFIKGGMYGMAQGLAQLNKDLGVNIELNAEIEQIIIDPKFKRADAIKVNGDIRKFDKILCTADFPSVAESLMPDFAPIKKYPPHKIADLDYSCSAFLMYIGIDIDVTDQVRLHNVIFADDFRGNIEEIFEGRLSHDPSIYVYVPAVADKSLAPQGQTGIYVLMPTPELKTGSGIDWSDEALTDQIKDVIYRKLATIEVFEDIKSHIVSETIFTPNDFEQTYHAKFGSAFGLMPTLAQSNYYRPQNVSRDYKDLYFAGASTHPGAGVPIVLTSAKITVDEMIKDIEQGV.

5-17 is a binding site for FAD; the sequence is VIGAGVTGLAAAA.

It belongs to the carotenoid/retinoid oxidoreductase family. CrtN subfamily.

It carries out the reaction 15-cis-4,4'-diapophytoene + 3 FAD + 3 H(+) = all-trans-4,4'-diaponeurosporene + 3 FADH2. It participates in carotenoid biosynthesis; staphyloxanthin biosynthesis; staphyloxanthin from farnesyl diphosphate: step 2/5. Functionally, involved in the biosynthesis of the yellow-orange carotenoid staphyloxanthin, which plays a role in the virulence via its protective function against oxidative stress. Catalyzes three successive dehydrogenation reactions that lead to the introduction of three double bonds into 4,4'-diapophytoene (dehydrosqualene), with 4,4'-diapophytofluene and 4,4'-diapo-zeta-carotene as intermediates, and 4,4'-diaponeurosporene (the major deep-yellow pigment in staphylococci strains) as the end product. In Staphylococcus aureus (strain MRSA252), this protein is 4,4'-diapophytoene desaturase (4,4'-diaponeurosporene-forming).